The primary structure comprises 192 residues: Probable thymidylate kinase (192 aa).

ATP is bound at residue 8-15 (GIDGSGKS).

This sequence belongs to the thymidylate kinase family.

The catalysed reaction is dTMP + ATP = dTDP + ADP. The chain is Probable thymidylate kinase from Pyrobaculum aerophilum (strain ATCC 51768 / DSM 7523 / JCM 9630 / CIP 104966 / NBRC 100827 / IM2).